We begin with the raw amino-acid sequence, 209 residues long: Virulence factors putative positive transcription regulator BvgA (209 aa).

The Response regulatory domain occupies Lys-4–Met-119. Asp-54 is modified (4-aspartylphosphate). Residues Asp-142–Asn-207 enclose the HTH luxR-type domain. Residues Asn-166 to Thr-185 constitute a DNA-binding region (H-T-H motif).

Homodimer. Post-translationally, phosphorylated by BvgS.

In terms of biological role, member of the two-component regulatory system BvgS/BvgA. Activates the transcription of virulence genes. The sequence is that of Virulence factors putative positive transcription regulator BvgA (bvgA) from Bordetella bronchiseptica (strain ATCC BAA-588 / NCTC 13252 / RB50) (Alcaligenes bronchisepticus).